We begin with the raw amino-acid sequence, 408 residues long: uncharacterized protein (408 aa).

Residues 49 to 77 (PRSSPEVQRKATAGENSEVGSPESSLSTS) form a disordered region. Positions 62-77 (GENSEVGSPESSLSTS) are enriched in polar residues. The region spanning 124 to 170 (SFEFMQLPDTDICQIMSFLDAQSLLNLSQTCSHLRQLCLAHEDNAGK) is the F-box domain.

This is an uncharacterized protein from Caenorhabditis elegans.